Here is a 516-residue protein sequence, read N- to C-terminus: Cytochrome P450 1A2 (516 aa).

O-linked (GlcNAc) serine glycosylation occurs at Ser-69. A substrate-binding site is contributed by Phe-226. Residue Cys-458 coordinates heme.

The protein belongs to the cytochrome P450 family. Interacts with PGRMC1; the interaction requires PGRMC1 homodimerization. Requires heme as cofactor. As to expression, liver.

It localises to the endoplasmic reticulum membrane. The protein localises to the microsome membrane. The enzyme catalyses an organic molecule + reduced [NADPH--hemoprotein reductase] + O2 = an alcohol + oxidized [NADPH--hemoprotein reductase] + H2O + H(+). It carries out the reaction 17beta-estradiol + reduced [NADPH--hemoprotein reductase] + O2 = 2-hydroxy-17beta-estradiol + oxidized [NADPH--hemoprotein reductase] + H2O + H(+). It catalyses the reaction 17beta-estradiol + reduced [NADPH--hemoprotein reductase] + O2 = 4-hydroxy-17beta-estradiol + oxidized [NADPH--hemoprotein reductase] + H2O + H(+). The catalysed reaction is estrone + reduced [NADPH--hemoprotein reductase] + O2 = 2-hydroxyestrone + oxidized [NADPH--hemoprotein reductase] + H2O + H(+). The enzyme catalyses estrone + reduced [NADPH--hemoprotein reductase] + O2 = 4-hydroxyestrone + oxidized [NADPH--hemoprotein reductase] + H2O + H(+). It carries out the reaction cholesterol + reduced [NADPH--hemoprotein reductase] + O2 = 25-hydroxycholesterol + oxidized [NADPH--hemoprotein reductase] + H2O + H(+). It catalyses the reaction all-trans-retinol + reduced [NADPH--hemoprotein reductase] + O2 = all-trans-retinal + oxidized [NADPH--hemoprotein reductase] + 2 H2O + H(+). The catalysed reaction is all-trans-retinal + reduced [NADPH--hemoprotein reductase] + O2 = all-trans-retinoate + oxidized [NADPH--hemoprotein reductase] + H2O + 2 H(+). The enzyme catalyses (5Z,8Z,11Z,14Z)-eicosatetraenoate + reduced [NADPH--hemoprotein reductase] + O2 = (14R,15S)-epoxy-(5Z,8Z,11Z)-eicosatrienoate + oxidized [NADPH--hemoprotein reductase] + H2O + H(+). It carries out the reaction (5Z,8Z,11Z,14Z)-eicosatetraenoate + reduced [NADPH--hemoprotein reductase] + O2 = (14S,15R)-epoxy-(5Z,8Z,11Z)-eicosatrienoate + oxidized [NADPH--hemoprotein reductase] + H2O + H(+). It catalyses the reaction (5Z,8Z,11Z,14Z,17Z)-eicosapentaenoate + reduced [NADPH--hemoprotein reductase] + O2 = (17R,18S)-epoxy-(5Z,8Z,11Z,14Z)-eicosatetraenoate + oxidized [NADPH--hemoprotein reductase] + H2O + H(+). The catalysed reaction is (4Z,7Z,10Z,13Z,16Z,19Z)-docosahexaenoate + reduced [NADPH--hemoprotein reductase] + O2 = (19R,20S)-epoxy-(4Z,7Z,10Z,13Z,16Z)-docosapentaenoate + oxidized [NADPH--hemoprotein reductase] + H2O + H(+). The enzyme catalyses (5S)-hydroperoxy-(6E,8Z,11Z,14Z)-eicosatetraenoate = 5-oxo-(6E,8Z,11Z,14Z)-eicosatetraenoate + H2O. It carries out the reaction (12S)-hydroperoxy-(5Z,8Z,10E,14Z)-eicosatetraenoate = 12-oxo-(5Z,8Z,10E,14Z)-eicosatetraenoate + H2O. It catalyses the reaction (15S)-hydroperoxy-(5Z,8Z,11Z,13E)-eicosatetraenoate = 15-oxo-(5Z,8Z,11Z,13E)-eicosatetraenoate + H2O. The catalysed reaction is (13S)-hydroperoxy-(9Z,11E)-octadecadienoate = 13-oxo-(9Z,11E)-octadecadienoate + H2O. The enzyme catalyses (5Z,8Z,11Z,14Z)-eicosatetraenoate + reduced [NADPH--hemoprotein reductase] + O2 = 13-hydroxy-(5Z,8Z,11Z,14Z)-eicosatetraenoate + oxidized [NADPH--hemoprotein reductase] + H2O + H(+). It carries out the reaction (5Z,8Z,11Z,14Z)-eicosatetraenoate + reduced [NADPH--hemoprotein reductase] + O2 = 19-hydroxy-(5Z,8Z,11Z,14Z)-eicosatetraenoate + oxidized [NADPH--hemoprotein reductase] + H2O + H(+). It catalyses the reaction (9Z,12Z)-octadecadienoate + reduced [NADPH--hemoprotein reductase] + O2 = 11-hydroxy-(9Z,12Z)-octadecadienoate + oxidized [NADPH--hemoprotein reductase] + H2O + H(+). Its pathway is cofactor metabolism; retinol metabolism. It participates in steroid metabolism; cholesterol metabolism. The protein operates within lipid metabolism; arachidonate metabolism. In terms of biological role, a cytochrome P450 monooxygenase involved in the metabolism of various endogenous substrates, including fatty acids, steroid hormones and vitamins. Mechanistically, uses molecular oxygen inserting one oxygen atom into a substrate, and reducing the second into a water molecule, with two electrons provided by NADPH via cytochrome P450 reductase (NADPH--hemoprotein reductase). Catalyzes the hydroxylation of carbon-hydrogen bonds. Exhibits high catalytic activity for the formation of hydroxyestrogens from estrone (E1) and 17beta-estradiol (E2), namely 2-hydroxy E1 and E2. Metabolizes cholesterol toward 25-hydroxycholesterol, a physiological regulator of cellular cholesterol homeostasis. May act as a major enzyme for all-trans retinoic acid biosynthesis in the liver. Catalyzes two successive oxidative transformation of all-trans retinol to all-trans retinal and then to the active form all-trans retinoic acid. Primarily catalyzes stereoselective epoxidation of the last double bond of polyunsaturated fatty acids (PUFA), displaying a strong preference for the (R,S) stereoisomer. Catalyzes bisallylic hydroxylation and omega-1 hydroxylation of PUFA. May also participate in eicosanoids metabolism by converting hydroperoxide species into oxo metabolites (lipoxygenase-like reaction, NADPH-independent). Plays a role in the oxidative metabolism of xenobiotics. Catalyzes the N-hydroxylation of heterocyclic amines and the O-deethylation of phenacetin. Metabolizes caffeine via N3-demethylation. The polypeptide is Cytochrome P450 1A2 (Homo sapiens (Human)).